We begin with the raw amino-acid sequence, 274 residues long: tRNA pseudouridine synthase A (274 aa).

Aspartate 56 (nucleophile) is an active-site residue. Substrate is bound at residue tyrosine 109.

Belongs to the tRNA pseudouridine synthase TruA family.

The enzyme catalyses uridine(38/39/40) in tRNA = pseudouridine(38/39/40) in tRNA. Its function is as follows. Formation of pseudouridine at positions 38, 39 and 40 in the anticodon stem and loop of transfer RNAs. The chain is tRNA pseudouridine synthase A from Methanosphaera stadtmanae (strain ATCC 43021 / DSM 3091 / JCM 11832 / MCB-3).